The chain runs to 285 residues: Glutamate racemase (285 aa).

Substrate-binding positions include aspartate 28–serine 29 and tyrosine 60–glycine 61. Cysteine 92 (proton donor/acceptor) is an active-site residue. Asparagine 93–threonine 94 serves as a coordination point for substrate. Catalysis depends on cysteine 204, which acts as the Proton donor/acceptor. Residue threonine 205–histidine 206 coordinates substrate.

It belongs to the aspartate/glutamate racemases family.

The enzyme catalyses L-glutamate = D-glutamate. The protein operates within cell wall biogenesis; peptidoglycan biosynthesis. Functionally, provides the (R)-glutamate required for cell wall biosynthesis. The polypeptide is Glutamate racemase (Escherichia coli O9:H4 (strain HS)).